The primary structure comprises 436 residues: UPF0597 protein YhaM (436 aa).

Belongs to the UPF0597 family.

The chain is UPF0597 protein YhaM from Escherichia coli (strain SE11).